Consider the following 247-residue polypeptide: MVLVPKYLNFESDLAESVTNSMDSSLPDETTSDSIILTTFNDFSNWARLSSLWPLLYGTSCCFIEFASLIGSRFDFDRYGLVPRSSPRQADLIITAGTVTMKMAPSLVRLYEQMPEPKYVIAMGACTITGGMFSTDSYSTVRGVDKLIPVDIYLPGCPPKPEAIIDAIIKLRKGVAREVHERKDKLRQTRRYFTLNHQLEIVPIIHTGKYDEHLFSKFSEISIEPKLNVSPQRIEKSKSSISSQISF.

The [4Fe-4S] cluster site is built by Cys61, Cys62, Cys126, and Cys157.

This sequence belongs to the complex I 20 kDa subunit family. As to quaternary structure, NDH is composed of at least 16 different subunits, 5 of which are encoded in the nucleus. The cofactor is [4Fe-4S] cluster.

Its subcellular location is the plastid. It is found in the chloroplast thylakoid membrane. It catalyses the reaction a plastoquinone + NADH + (n+1) H(+)(in) = a plastoquinol + NAD(+) + n H(+)(out). The catalysed reaction is a plastoquinone + NADPH + (n+1) H(+)(in) = a plastoquinol + NADP(+) + n H(+)(out). In terms of biological role, NDH shuttles electrons from NAD(P)H:plastoquinone, via FMN and iron-sulfur (Fe-S) centers, to quinones in the photosynthetic chain and possibly in a chloroplast respiratory chain. The immediate electron acceptor for the enzyme in this species is believed to be plastoquinone. Couples the redox reaction to proton translocation, and thus conserves the redox energy in a proton gradient. This is NAD(P)H-quinone oxidoreductase subunit K, chloroplastic from Anthoceros angustus (Hornwort).